Reading from the N-terminus, the 410-residue chain is Putative competence-damage inducible protein (410 aa).

This sequence belongs to the CinA family.

The sequence is that of Putative competence-damage inducible protein from Clostridium beijerinckii (strain ATCC 51743 / NCIMB 8052) (Clostridium acetobutylicum).